A 253-amino-acid chain; its full sequence is Imidazole glycerol phosphate synthase subunit HisF (253 aa).

Residues Asp11 and Asp130 contribute to the active site.

This sequence belongs to the HisA/HisF family. Heterodimer of HisH and HisF.

Its subcellular location is the cytoplasm. The enzyme catalyses 5-[(5-phospho-1-deoxy-D-ribulos-1-ylimino)methylamino]-1-(5-phospho-beta-D-ribosyl)imidazole-4-carboxamide + L-glutamine = D-erythro-1-(imidazol-4-yl)glycerol 3-phosphate + 5-amino-1-(5-phospho-beta-D-ribosyl)imidazole-4-carboxamide + L-glutamate + H(+). The protein operates within amino-acid biosynthesis; L-histidine biosynthesis; L-histidine from 5-phospho-alpha-D-ribose 1-diphosphate: step 5/9. Its function is as follows. IGPS catalyzes the conversion of PRFAR and glutamine to IGP, AICAR and glutamate. The HisF subunit catalyzes the cyclization activity that produces IGP and AICAR from PRFAR using the ammonia provided by the HisH subunit. The protein is Imidazole glycerol phosphate synthase subunit HisF of Desulfitobacterium hafniense (strain DSM 10664 / DCB-2).